The following is a 342-amino-acid chain: Ferrochelatase (342 aa).

Fe cation contacts are provided by His-188 and Glu-268.

It belongs to the ferrochelatase family.

It is found in the cytoplasm. It catalyses the reaction heme b + 2 H(+) = protoporphyrin IX + Fe(2+). The protein operates within porphyrin-containing compound metabolism; protoheme biosynthesis; protoheme from protoporphyrin-IX: step 1/1. In terms of biological role, catalyzes the ferrous insertion into protoporphyrin IX. In Rickettsia typhi (strain ATCC VR-144 / Wilmington), this protein is Ferrochelatase.